The chain runs to 122 residues: Small ribosomal subunit protein bS6 (122 aa).

The protein belongs to the bacterial ribosomal protein bS6 family.

Its function is as follows. Binds together with bS18 to 16S ribosomal RNA. The sequence is that of Small ribosomal subunit protein bS6 from Neisseria gonorrhoeae (strain ATCC 700825 / FA 1090).